A 140-amino-acid chain; its full sequence is Putative pre-16S rRNA nuclease (140 aa).

The protein belongs to the YqgF nuclease family.

It localises to the cytoplasm. Functionally, could be a nuclease involved in processing of the 5'-end of pre-16S rRNA. The chain is Putative pre-16S rRNA nuclease from Chlorobium chlorochromatii (strain CaD3).